Consider the following 122-residue polypeptide: Large ribosomal subunit protein uL14 (122 aa).

The protein belongs to the universal ribosomal protein uL14 family. As to quaternary structure, part of the 50S ribosomal subunit. Forms a cluster with proteins L3 and L19. In the 70S ribosome, L14 and L19 interact and together make contacts with the 16S rRNA in bridges B5 and B8.

Its function is as follows. Binds to 23S rRNA. Forms part of two intersubunit bridges in the 70S ribosome. This Kosmotoga olearia (strain ATCC BAA-1733 / DSM 21960 / TBF 19.5.1) protein is Large ribosomal subunit protein uL14.